We begin with the raw amino-acid sequence, 225 residues long: Uracil-DNA glycosylase (225 aa).

Asp65 functions as the Proton acceptor in the catalytic mechanism.

The protein belongs to the uracil-DNA glycosylase (UDG) superfamily. UNG family.

It is found in the cytoplasm. It carries out the reaction Hydrolyzes single-stranded DNA or mismatched double-stranded DNA and polynucleotides, releasing free uracil.. In terms of biological role, excises uracil residues from the DNA which can arise as a result of misincorporation of dUMP residues by DNA polymerase or due to deamination of cytosine. The chain is Uracil-DNA glycosylase from Bacillus thuringiensis subsp. konkukian (strain 97-27).